Reading from the N-terminus, the 614-residue chain is Sulfite reductase [NADPH] flavoprotein alpha-component (614 aa).

Residues 79 to 217 (LTIIFASQTG…AATEWRKQVL (139 aa)) enclose the Flavodoxin-like domain. Residues 85 to 90 (SQTGNA), 132 to 135 (STNG), and 168 to 177 (LGDSSYQFFC) contribute to the FMN site. Positions 249 to 463 (EQPYTASLST…VEHNNNFKLP (215 aa)) constitute an FAD-binding FR-type domain. FAD is bound by residues T337, T371, 401–404 (RLYS), 419–421 (TVG), Y425, and 434–437 (GGAS). NADP(+) contacts are provided by residues 534–535 (SR), 540–544 (KVYVQ), and D576. Residue Y614 participates in FAD binding.

This sequence belongs to the NADPH-dependent sulphite reductase flavoprotein subunit CysJ family. The protein in the N-terminal section; belongs to the flavodoxin family. In the C-terminal section; belongs to the flavoprotein pyridine nucleotide cytochrome reductase family. Alpha(8)-beta(8). The alpha component is a flavoprotein, the beta component is a hemoprotein. FAD is required as a cofactor. FMN serves as cofactor.

It carries out the reaction hydrogen sulfide + 3 NADP(+) + 3 H2O = sulfite + 3 NADPH + 4 H(+). It participates in sulfur metabolism; hydrogen sulfide biosynthesis; hydrogen sulfide from sulfite (NADPH route): step 1/1. Its function is as follows. Component of the sulfite reductase complex that catalyzes the 6-electron reduction of sulfite to sulfide. This is one of several activities required for the biosynthesis of L-cysteine from sulfate. The flavoprotein component catalyzes the electron flow from NADPH -&gt; FAD -&gt; FMN to the hemoprotein component. The chain is Sulfite reductase [NADPH] flavoprotein alpha-component from Vibrio cholerae serotype O1 (strain ATCC 39541 / Classical Ogawa 395 / O395).